Here is a 455-residue protein sequence, read N- to C-terminus: GTPase Der (455 aa).

EngA-type G domains follow at residues 4–174 and 183–358; these read PIVA…PAGQ and LKIA…SERN. GTP contacts are provided by residues 10-17, 57-61, 126-129, 189-196, 236-240, and 301-304; these read GRPNVGKS, DTAGL, NKAD, DTAGI, and NKWD. In terms of domain architecture, KH-like spans 359–444; the sequence is KRVSTSDINN…PIILVFKGRE (86 aa).

The protein belongs to the TRAFAC class TrmE-Era-EngA-EngB-Septin-like GTPase superfamily. EngA (Der) GTPase family. As to quaternary structure, associates with the 50S ribosomal subunit.

Functionally, GTPase that plays an essential role in the late steps of ribosome biogenesis. This Herpetosiphon aurantiacus (strain ATCC 23779 / DSM 785 / 114-95) protein is GTPase Der.